A 208-amino-acid chain; its full sequence is LexA repressor (208 aa).

Residues 29–49 (VREICGAVGLSSTSTVHGHIN) constitute a DNA-binding region (H-T-H motif). Residues Ser-129 and Lys-167 each act as for autocatalytic cleavage activity in the active site.

It belongs to the peptidase S24 family. Homodimer.

The enzyme catalyses Hydrolysis of Ala-|-Gly bond in repressor LexA.. Its function is as follows. Represses a number of genes involved in the response to DNA damage (SOS response), including recA and lexA. In the presence of single-stranded DNA, RecA interacts with LexA causing an autocatalytic cleavage which disrupts the DNA-binding part of LexA, leading to derepression of the SOS regulon and eventually DNA repair. This is LexA repressor from Limosilactobacillus fermentum (strain NBRC 3956 / LMG 18251) (Lactobacillus fermentum).